The following is a 70-amino-acid chain: uncharacterized protein (70 aa).

The protein resides in the plastid. It localises to the chloroplast. This is an uncharacterized protein from Mesostigma viride (Green alga).